A 452-amino-acid chain; its full sequence is Chromosomal replication initiator protein DnaA (452 aa).

Positions 1-80 (MSSTVSTLWR…NNDQFMVKIQ (80 aa)) are domain I, interacts with DnaA modulators. The segment at 80-114 (QDGIKPTEKTTTNVEQKTQNENCHNEITSQQNYRS) is domain II. The domain III, AAA+ region stretch occupies residues 115–332 (YLNKNHVFDN…GALNRVHAHA (218 aa)). Residues G160, G162, K163, and T164 each contribute to the ATP site. The tract at residues 333–452 (EFTGKAITID…WSNLIRTLSV (120 aa)) is domain IV, binds dsDNA.

This sequence belongs to the DnaA family. In terms of assembly, oligomerizes as a right-handed, spiral filament on DNA at oriC.

The protein localises to the cytoplasm. Its function is as follows. Plays an essential role in the initiation and regulation of chromosomal replication. ATP-DnaA binds to the origin of replication (oriC) to initiate formation of the DNA replication initiation complex once per cell cycle. Binds the DnaA box (a 9 base pair repeat at the origin) and separates the double-stranded (ds)DNA. Forms a right-handed helical filament on oriC DNA; dsDNA binds to the exterior of the filament while single-stranded (ss)DNA is stabiized in the filament's interior. The ATP-DnaA-oriC complex binds and stabilizes one strand of the AT-rich DNA unwinding element (DUE), permitting loading of DNA polymerase. After initiation quickly degrades to an ADP-DnaA complex that is not apt for DNA replication. Binds acidic phospholipids. The polypeptide is Chromosomal replication initiator protein DnaA (Histophilus somni (strain 129Pt) (Haemophilus somnus)).